Here is a 329-residue protein sequence, read N- to C-terminus: Glycerol-3-phosphate dehydrogenase [NAD(P)+] (329 aa).

4 residues coordinate NADPH: Ser13, Trp14, His34, and Lys105. Sn-glycerol 3-phosphate contacts are provided by Lys105, Gly134, and Ser136. Ala138 contacts NADPH. Residues Lys189, Asp242, Ser252, Arg253, and Asn254 each coordinate sn-glycerol 3-phosphate. The Proton acceptor role is filled by Lys189. NADPH is bound at residue Arg253. 2 residues coordinate NADPH: Val277 and Glu279.

This sequence belongs to the NAD-dependent glycerol-3-phosphate dehydrogenase family.

The protein localises to the cytoplasm. The catalysed reaction is sn-glycerol 3-phosphate + NAD(+) = dihydroxyacetone phosphate + NADH + H(+). It catalyses the reaction sn-glycerol 3-phosphate + NADP(+) = dihydroxyacetone phosphate + NADPH + H(+). It functions in the pathway membrane lipid metabolism; glycerophospholipid metabolism. Catalyzes the reduction of the glycolytic intermediate dihydroxyacetone phosphate (DHAP) to sn-glycerol 3-phosphate (G3P), the key precursor for phospholipid synthesis. The polypeptide is Glycerol-3-phosphate dehydrogenase [NAD(P)+] (Legionella pneumophila subsp. pneumophila (strain Philadelphia 1 / ATCC 33152 / DSM 7513)).